The chain runs to 185 residues: Elongation factor P (185 aa).

It belongs to the elongation factor P family.

The protein resides in the cytoplasm. Its pathway is protein biosynthesis; polypeptide chain elongation. Its function is as follows. Involved in peptide bond synthesis. Stimulates efficient translation and peptide-bond synthesis on native or reconstituted 70S ribosomes in vitro. Probably functions indirectly by altering the affinity of the ribosome for aminoacyl-tRNA, thus increasing their reactivity as acceptors for peptidyl transferase. In Clostridium botulinum (strain ATCC 19397 / Type A), this protein is Elongation factor P.